The chain runs to 256 residues: uncharacterized protein (256 aa).

An N-terminal signal peptide occupies residues 1 to 24; that stretch reads MIKRVNKLVLGISLLFLVISIAAG. Cysteine 25 carries the N-palmitoyl cysteine lipid modification. Cysteine 25 carries the S-diacylglycerol cysteine lipid modification.

This sequence belongs to the staphylococcal tandem lipoprotein family.

It localises to the cell membrane. This is an uncharacterized protein from Staphylococcus aureus.